The primary structure comprises 1177 residues: Solute carrier family 9 member C1 (1177 aa).

Topologically, residues 1–17 (MAGIFKEFFFSTEDLPE) are extracellular. The chain crosses the membrane as a helical span at residues 18-37 (VILTLSLISSIGAFLNRHLE). Residues 38–42 (DFPIP) are Cytoplasmic-facing. A helical membrane pass occupies residues 43 to 60 (VPVILFLLGCSFEVLSFT). Residues 61 to 76 (SSQVQRYANAIQWMSP) are Extracellular-facing. The helical transmembrane segment at 77-93 (DLFFRIFTPVVFFTTAF) threads the bilayer. Residues 94–103 (DMDTYMLQKL) are Cytoplasmic-facing. The helical transmembrane segment at 104-129 (FWQILLISIPGFLVNYILVLWHLASV) threads the bilayer. The transport core domain stretch occupies residues 104 to 191 (FWQILLISIP…SLITFTSIMD (88 aa)). Over 130–135 (NQLLLK) the chain is Extracellular. A helical transmembrane segment spans residues 136-161 (PTQWLLFSAILVSSDPMLTAAAIRDL). Over 162 to 164 (GLS) the chain is Cytoplasmic. Residues 165 to 190 (RSLISLINGESLMTSVISLITFTSIM) traverse the membrane as a helical segment. Topologically, residues 191 to 204 (DFDQRLQSKRNHTL) are extracellular. The chain crosses the membrane as a helical span at residues 205 to 236 (AEEIVGGICSYIIASFLFGILSSKLIQFWMST). At 237-240 (VFGD) the chain is on the cytoplasmic side. A helical transmembrane segment spans residues 241-262 (DVNHISLIFSILYLIFYICELV). Over 263–265 (GMS) the chain is Extracellular. The chain crosses the membrane as a helical span at residues 266–279 (GIFTLAIVGLLLNS). Residues 280-286 (TSFKAAI) lie on the Cytoplasmic side of the membrane. The chain crosses the membrane as a helical span at residues 287 to 319 (EETLLLEFWTFLSRIAFLMVFTFFGLLIPAHTY). Residues 320 to 324 (LYIEF) lie on the Extracellular side of the membrane. The chain crosses the membrane as a helical span at residues 325-354 (VDIYYSLNIYLTLIVLRFLTLLLISPVLSR). The tract at residues 325 to 426 (VDIYYSLNIY…FILPVAVTIL (102 aa)) is transport core domain. The Cytoplasmic portion of the chain corresponds to 355–360 (VGHEFS). Residues 361–391 (WRWIFIMVCSEMKGMPNINMALLLAYSDLYF) traverse the membrane as a helical segment. Topologically, residues 392-395 (GSDK) are extracellular. A helical membrane pass occupies residues 396–426 (EKSQILFHGVLVCLITLVVNRFILPVAVTIL). Residues 427 to 612 (GLRDATSTKY…ICHTIVFTEE (186 aa)) lie on the Cytoplasmic side of the membrane. The segment at 598-678 (YFFFRICHTI…DFFSHAWNIF (81 aa)) is ion transport-like. A helical transmembrane segment spans residues 613 to 633 (FEHVGYLVILMNIFPFIISWI). Residues 634-637 (SQLN) lie on the Extracellular side of the membrane. A helical transmembrane segment spans residues 638–664 (VIYHSELKHTNYCFLTLYILEALLKIA). Topologically, residues 665 to 671 (AMRKDFF) are cytoplasmic. A helical membrane pass occupies residues 672-696 (SHAWNIFELAITLIGILHVILIEID). At 697-704 (TIKYIFNE) the chain is on the extracellular side. Residues 705-731 (TEVIVFIKVVQFFRILRIFKLIAPKLL) traverse the membrane as a helical segment. Residues 732 to 1177 (QIIDKRMSHQ…RINLRKVRKE (446 aa)) lie on the Cytoplasmic side of the membrane.

Belongs to the monovalent cation:proton antiporter 1 (CPA1) transporter (TC 2.A.36) family. Interacts with soluble adenylyl cyclase (sAC). As to expression, sperm.

It localises to the cell projection. Its subcellular location is the cilium. The protein localises to the flagellum membrane. In terms of biological role, sperm-specific solute carrier involved in intracellular pH regulation of spermatozoa. Required for sperm motility and fertility. Involved in sperm cell hyperactivation, a step needed for sperm motility which is essential late in the preparation of sperm for fertilization. Required for the expression and bicarbonate regulation of the soluble adenylyl cyclase (sAC). In Homo sapiens (Human), this protein is Solute carrier family 9 member C1 (SLC9C1).